The sequence spans 1140 residues: Probable DNA-directed RNA polymerase II subunit RPB2 homolog (1140 aa).

A Mg(2+)-binding site is contributed by D773. Zn(2+) is bound by residues C1092, C1095, C1105, and C1108. The segment at 1092–1108 (CKDCGMMSSTSKKCHHC) adopts a C4-type zinc-finger fold.

This sequence belongs to the RNA polymerase beta chain family.

The enzyme catalyses RNA(n) + a ribonucleoside 5'-triphosphate = RNA(n+1) + diphosphate. Functionally, component of the DNA-dependent RNA polymerase that catalyzes the transcription of DNA into RNA using the four ribonucleoside triphosphates as substrates. Second largest component of RNA polymerase II which synthesizes mRNA precursors and many functional non-coding RNAs. Proposed to contribute to the polymerase catalytic activity and forms the polymerase active center together with the largest subunit. The chain is Probable DNA-directed RNA polymerase II subunit RPB2 homolog from Invertebrate iridescent virus 3 (IIV-3).